The sequence spans 145 residues: Putative pre-16S rRNA nuclease (145 aa).

Belongs to the YqgF nuclease family.

The protein resides in the cytoplasm. Its function is as follows. Could be a nuclease involved in processing of the 5'-end of pre-16S rRNA. In Opitutus terrae (strain DSM 11246 / JCM 15787 / PB90-1), this protein is Putative pre-16S rRNA nuclease.